The chain runs to 2074 residues: Cell adhesion molecule Dscam2 (2074 aa).

An N-terminal signal peptide occupies residues 1-21 (MWISSRFFVILLLLNLDNTCS). At 22 to 1619 (EPFEAHLRGP…QTTVIFANIN (1598 aa)) the chain is on the extracellular side. Ig-like C2-type domains are found at residues 31 to 120 (PGFV…RIVS), 238 to 326 (PSVV…LRLT), 330 to 417 (PIQV…AELQ), 422 to 516 (PPVL…ARLN), 521 to 607 (PYIR…GEVT), 612 to 698 (PSIE…IKYT), 707 to 802 (PRWI…LKVN), and 805 to 902 (PYFS…LQVQ). Intrachain disulfides connect Cys53-Cys109, Cys259-Cys310, Cys352-Cys400, Cys444-Cys500, Cys541-Cys590, Cys633-Cys686, Cys728-Cys783, and Cys826-Cys884. Fibronectin type-III domains lie at 907-1003 (PPSV…TEPQ), 1008-1108 (PPLS…TMED), 1113-1211 (PPED…SEED), and 1215-1311 (APAD…TNRI). In terms of domain architecture, Ig-like C2-type 9 spans 1312–1400 (PARIISFGGP…DRLTHTLIVQ (89 aa)). A disulfide bridge connects residues Cys1334 and Cys1382. Fibronectin type-III domains lie at 1402–1495 (PPTA…TQGQ) and 1496–1595 (SPGH…TKDG). A helical membrane pass occupies residues 1620-1640 (LLIPTIAAVSGMFCTIIMIIV). Over 1641–2074 (CYRHMLKNAP…KFFTAPTLPK (434 aa)) the chain is Cytoplasmic. Disordered stretches follow at residues 1739 to 1766 (EGCSSPPPAAVLNPPTTTTHHHHHHQRP), 1778 to 1917 (PFHN…KSIS), 1936 to 1974 (SPSISTQQQKQFHKQQLQNSSTNNSQHSSSNPNSSSLKQ), and 2011 to 2074 (PSSQ…TLPK). Basic residues predominate over residues 1757-1766 (THHHHHHQRP). The segment covering 1831 to 1846 (AQSSTSSDLSPMSEQK) has biased composition (polar residues). The span at 1848 to 1858 (LPRRGRSRYHH) shows a compositional bias: basic residues. Residues 1859-1868 (QQYQFSTNTT) show a composition bias toward polar residues. 3 stretches are compositionally biased toward low complexity: residues 1875–1903 (NKMNNNTTSNTNTTATNTTATPSTSSNSN), 1942–1974 (QQQKQFHKQQLQNSSTNNSQHSSSNPNSSSLKQ), and 2036–2051 (SQQSHPHQQQQQQQHP). Residues 2055-2066 (LNPSTAMLSSKF) are compositionally biased toward polar residues.

It is found in the membrane. In terms of biological role, cell adhesion molecule. In Drosophila melanogaster (Fruit fly), this protein is Cell adhesion molecule Dscam2 (Dscam2).